Consider the following 66-residue polypeptide: U10-theraphotoxin-Cg1a 1 (66 aa).

The signal sequence occupies residues 1-21 (MKTSVLFVIFGLALLFCLSFA). A propeptide spanning residues 22–29 (AELEDTGR) is cleaved from the precursor. Disulfide bonds link Cys31–Cys46, Cys38–Cys51, and Cys45–Cys58.

The protein belongs to the neurotoxin 10 (Hwtx-1) family. 29 (Jztx-13) subfamily. In terms of tissue distribution, expressed by the venom gland.

Its subcellular location is the secreted. Its function is as follows. Probable ion channel inhibitor. This chain is U10-theraphotoxin-Cg1a 1, found in Chilobrachys guangxiensis (Chinese earth tiger tarantula).